The sequence spans 99 residues: Large ribosomal subunit protein uL23 (99 aa).

This sequence belongs to the universal ribosomal protein uL23 family. As to quaternary structure, part of the 50S ribosomal subunit. Contacts protein L29, and trigger factor when it is bound to the ribosome.

In terms of biological role, one of the early assembly proteins it binds 23S rRNA. One of the proteins that surrounds the polypeptide exit tunnel on the outside of the ribosome. Forms the main docking site for trigger factor binding to the ribosome. In Francisella tularensis subsp. tularensis (strain SCHU S4 / Schu 4), this protein is Large ribosomal subunit protein uL23.